The sequence spans 321 residues: PIH1 domain-containing protein 2 (321 aa).

It belongs to the PIH1 family.

This Xenopus tropicalis (Western clawed frog) protein is PIH1 domain-containing protein 2 (pih1d2).